The sequence spans 255 residues: Aliphatic sulfonates import ATP-binding protein SsuB (255 aa).

An ABC transporter domain is found at 12-233; the sequence is LLLNAVSKHY…RLGSVRLAEL (222 aa). ATP is bound at residue 44-51; the sequence is GRSGGGKS.

It belongs to the ABC transporter superfamily. Aliphatic sulfonates importer (TC 3.A.1.17.2) family. In terms of assembly, the complex is composed of two ATP-binding proteins (SsuB), two transmembrane proteins (SsuC) and a solute-binding protein (SsuA).

The protein localises to the cell inner membrane. It carries out the reaction ATP + H2O + aliphatic sulfonate-[sulfonate-binding protein]Side 1 = ADP + phosphate + aliphatic sulfonateSide 2 + [sulfonate-binding protein]Side 1.. Part of the ABC transporter complex SsuABC involved in aliphatic sulfonates import. Responsible for energy coupling to the transport system. The sequence is that of Aliphatic sulfonates import ATP-binding protein SsuB from Escherichia coli O1:K1 / APEC.